We begin with the raw amino-acid sequence, 621 residues long: tRNA uridine 5-carboxymethylaminomethyl modification enzyme MnmG (621 aa).

Residue 8–13 (GAGHAG) participates in FAD binding. NAD(+) is bound at residue 269 to 283 (GPRYCPSVEDKIFRF).

It belongs to the MnmG family. Homodimer. Heterotetramer of two MnmE and two MnmG subunits. It depends on FAD as a cofactor.

It localises to the cytoplasm. Its function is as follows. NAD-binding protein involved in the addition of a carboxymethylaminomethyl (cmnm) group at the wobble position (U34) of certain tRNAs, forming tRNA-cmnm(5)s(2)U34. The sequence is that of tRNA uridine 5-carboxymethylaminomethyl modification enzyme MnmG from Chlorobium chlorochromatii (strain CaD3).